The primary structure comprises 4644 residues: Cytoplasmic dynein 1 heavy chain 1 (4644 aa).

S2 is subject to N-acetylserine. Positions 2 to 1865 (SEPGGGEDGS…SIQMANAKFN (1864 aa)) are stem. Coiled coils occupy residues 48–69 (AALEAALEEKSALEQMRKFLSD), 179–200 (SVEKKIAELEMGLLHLQQNIEI), 453–476 (AHRKLQARLDQMRKFRRQHEQLRA), and 541–564 (TEAWEAAMKRYDERIDRVETRITA). Phosphoserine is present on S68. Residues 446–701 (MVWRINPAHR…NTQEIFDDWA (256 aa)) form an interaction with DYNC1I2 region. Residues 649–800 (AKQIDRQLTA…EKVEERNTIS (152 aa)) are interaction with DYNC1LI2. N6-acetyllysine is present on K1123. The stretch at 1169 to 1201 (TYVQSLKRKIKQFEKQVELYRNGQRLLEKQRFQ) forms a coiled coil. A Phosphoserine modification is found at S1228. 2 coiled-coil regions span residues 1229–1250 (AIQQQVANLQMKIVQEDRAVES) and 1355–1371 (RKLRQNLDGLLNQLKNF). AAA stretches follow at residues 1866–2097 (YGFE…VLVS), 2178–2450 (EELK…LTRL), 2554–2803 (EVET…WVRG), and 2897–3166 (VFYE…GGRT). ATP contacts are provided by residues 1904 to 1911 (GPAGTGKT) and 2222 to 2229 (GPSGSGKS). The tract at residues 2388–2408 (GEDEAQRRRKGKEDEGEEAAS) is disordered. Residues 2593-2600 (GPPGSGKT) and 2935-2942 (GVSGAGKT) contribute to the ATP site. Coiled coils occupy residues 3187-3273 (EKRS…ADKQ), 3394-3498 (AIAQ…KNQM), and 3735-3798 (EFQL…VSQQ). The segment at 3187–3498 (EKRSELEEQQ…KTSETFKNQM (312 aa)) is stalk. Position 3478 is an N6-acetyllysine (K3478). 2 AAA regions span residues 3551–3780 (LSNA…EVTR) and 4003–4219 (AHMF…TVDT). S4160 is subject to Phosphoserine. N6-acetyllysine is present on K4281. Position 4364 is a phosphothreonine (T4364). S4366 bears the Phosphoserine mark.

This sequence belongs to the dynein heavy chain family. Homodimer. The cytoplasmic dynein 1 complex consists of two catalytic heavy chains (HCs) and a number of non-catalytic subunits presented by intermediate chains (ICs), light intermediate chains (LICs) and light chains (LCs); the composition seems to vary in respect to the IC, LIC and LC composition. The heavy chain homodimer serves as a scaffold for the probable homodimeric assembly of the respective non-catalytic subunits. The ICs and LICs bind directly to the HC dimer and dynein LCs assemble on the IC dimer. Interacts with DYNC1LI1; DYNC1LI1 and DYNC1LI2 bind mutually exclusive to DYNC1H1. Interacts with DYNC1LI2; DYNC1LI1 and DYNC1LI2 bind mutually exclusive to DYNC1H1. Interacts with DYNC1I2. Interacts with BICD2. Interacts with DNALI1.

Its subcellular location is the cytoplasm. It is found in the cytoskeleton. Cytoplasmic dynein 1 acts as a motor for the intracellular retrograde motility of vesicles and organelles along microtubules. Dynein has ATPase activity; the force-producing power stroke is thought to occur on release of ADP. Plays a role in mitotic spindle assembly and metaphase plate congression. In Mus musculus (Mouse), this protein is Cytoplasmic dynein 1 heavy chain 1 (Dync1h1).